The primary structure comprises 316 residues: Retinol dehydrogenase 7 (316 aa).

An NADP(+)-binding site is contributed by 33–57 (FITGCDSGFGNLLARQLDRRGMRVL). Residue Ser-163 participates in substrate binding. Tyr-175 serves as the catalytic Proton acceptor.

The protein belongs to the short-chain dehydrogenases/reductases (SDR) family. Highly expressed in liver. Also expressed in lung, eye, kidney, and brain.

It is found in the microsome. It localises to the endoplasmic reticulum. The enzyme catalyses all-trans-retinol--[retinol-binding protein] + NAD(+) = all-trans-retinal--[retinol-binding protein] + NADH + H(+). It functions in the pathway cofactor metabolism; retinol metabolism. Functionally, acts on androgens and retinols, i.e. has steroid 3-alpha- and 17-beta-dehydrogenase and cis/trans-retinol catalytic activities. This Mus musculus (Mouse) protein is Retinol dehydrogenase 7 (Rdh7).